Consider the following 363-residue polypeptide: Probable L-tyrosine/L-aspartate decarboxylase (363 aa).

Lysine 208 is modified (N6-(pyridoxal phosphate)lysine).

It belongs to the group II decarboxylase family. MfnA subfamily. Pyridoxal 5'-phosphate serves as cofactor.

The catalysed reaction is L-tyrosine + H(+) = tyramine + CO2. It catalyses the reaction L-aspartate + H(+) = beta-alanine + CO2. The protein operates within cofactor biosynthesis; methanofuran biosynthesis. It participates in cofactor biosynthesis; coenzyme A biosynthesis. Its function is as follows. Catalyzes the decarboxylation of L-tyrosine to produce tyramine for methanofuran biosynthesis. Can also catalyze the decarboxylation of L-aspartate to produce beta-alanine for coenzyme A (CoA) biosynthesis. The protein is Probable L-tyrosine/L-aspartate decarboxylase of Methanothermobacter thermautotrophicus (strain ATCC 29096 / DSM 1053 / JCM 10044 / NBRC 100330 / Delta H) (Methanobacterium thermoautotrophicum).